Here is a 541-residue protein sequence, read N- to C-terminus: Zinc finger protein 513 (541 aa).

The tract at residues 1-118 is disordered; the sequence is MPRRKQSHPQ…GEARGERPGP (118 aa). Positions 44-55 are enriched in acidic residues; sequence LEFEEEEEEDEG. Residues S85 and S96 each carry the phosphoserine modification. The segment covering 103 to 115 has biased composition (basic and acidic residues); it reads EPARGPGEARGER. 8 consecutive C2H2-type zinc fingers follow at residues 150 to 172, 178 to 200, 206 to 228, 360 to 382, 388 to 410, 416 to 438, 444 to 466, and 472 to 494; these read YSCR…MQTH, FRCG…TRTH, YRCP…QRTH, FACS…MKTH, FRCA…QRVH, YKCP…GRIH, FRCS…MLRH, and FRCA…QKVH. Positions 492–541 are disordered; that stretch reads KVHGHGGAGGPGLSAPEGWAPPHSPPSVLSTRGPAALGATGSRALHSDSP.

Belongs to the krueppel C2H2-type zinc-finger protein family. In terms of assembly, binds DNA. Can associate with the proximal promoter regions of PAX6 and SP4, and their known targets including ARR3, RHO, OPN1MW2 and OPN1SW. In terms of tissue distribution, widely expressed. In the eye, expression is greatest in the retina and least in the lens and cornea.

It localises to the nucleus. Functionally, transcriptional regulator that plays a role in retinal development and maintenance. This Mus musculus (Mouse) protein is Zinc finger protein 513 (Znf513).